We begin with the raw amino-acid sequence, 791 residues long: MTEMTTPLSPRELDLMNAYWRAANYLSVGQIYLMDNPLLKEPLSKEHIKPRLLGHWGTTPGLNFLYVHLNRIIRNRDLDIIYIAGPGHGGPALVANVWLEGTYSEYYPDVSFDEAGMKRLFRQFSFPGGIPSHVAPATPGSIHEGGELGYALSHAYGAVFDNPDLVAACVIGDGEAETGPLATAWHSNKFLNPKRDGAVLPVLHLNGYKIANPTVLARISHEELEQLMIGYGYKPYFVEGDDPATMHQMMAATMDRCFDEIAEIQRRARVDGVTERPMWPMIVFRSPKGWTGPKVVDGKPAEGSWRSHQVPFSTVRDNPEHMALLETWLKSYRAEELFTADGVLLPELQELAPRGKKRMGDIPHANGGLLLKELRMPDFREYGIDVPKPGSVEAEAPKPMARFLRDIMKMNEKAANFRVFGPDETASNRLGELFEETDRTWMAGMLPTDDHLSRDGRVMEILSEHTCQGWLEGYLLTGRHGFFSCYEAFIHIIDSMFNQHAKWLKVTGAEIPWRRPIASLNYFLTSHVWRQDHNGFSHQDPGFIDHVVNKKSSVIRVYLPPDANSLLSVTNHCLRSRNYINVIVAGKQPAWQWLDMESAVRHCTSGIGIWEWASNDANEGEPDVVMACAGDVPTLETLAAVKILRKLAPELKIRVVNVVDLMTLQPKEEHPHGLADRDFDDMFTTDKPIIFAYHGYPWLIHRLTYRRTNHHNLHVRGYKEEGTTTTPFDMVVMNELDRFHLVADVANRVESLRPQAAYIKQYVRDRLIEHKEYITKYGEDMPEVRDWRWED.

Belongs to the XFP family. Thiamine diphosphate is required as a cofactor.

This is Probable phosphoketolase from Chlorobaculum tepidum (strain ATCC 49652 / DSM 12025 / NBRC 103806 / TLS) (Chlorobium tepidum).